A 427-amino-acid polypeptide reads, in one-letter code: Dorsalin-1 (427 aa).

A signal peptide spans 1–20; sequence MHYFGVLAALSVFNIIACLT. The propeptide occupies 21 to 318; the sequence is RGKPLENWKK…PRQHSSRSKR (298 aa). N-linked (GlcNAc...) asparagine glycans are attached at residues Asn71, Asn136, Asn265, and Asn292. A disordered region spans residues 288–321; it reads KLGKNDSSSEEEQREEKAIARPRQHSSRSKRSIG. Basic residues predominate over residues 307-321; sequence ARPRQHSSRSKRSIG. 3 disulfides stabilise this stretch: Cys325/Cys391, Cys354/Cys424, and Cys358/Cys426.

It belongs to the TGF-beta family. Homodimer; disulfide-linked. In terms of tissue distribution, expressed selectively in the dorsal neural tube. Lower levels seen in kidney and myotomal cells.

The protein localises to the secreted. Its function is as follows. Appears to regulate cell differentiation within the neural tube. May regulate the differentiation of cell types along the dorsoventral axis of the neural tube, acting in conjunction with distinct ventralizing signals from the notochord and floor plate. Controls the cell differentiation in the neural tube in several ways: (1) promotes the differentiation of cell types that derive from the dorsal neural tube. (2) ensures that the dorsal neural tube is refractory to ventralizing species from the notochord. (3) can diffuse and influence the fate of cells in more ventral regions of the neural tube. This Gallus gallus (Chicken) protein is Dorsalin-1 (DSL1).